Here is a 412-residue protein sequence, read N- to C-terminus: Proline-rich protein 30 (412 aa).

2 stretches are compositionally biased toward polar residues: residues 1–15 and 23–39; these read MLPQ…QTSV and GFSQ…QPLS. 3 disordered regions span residues 1-88, 123-174, and 317-412; these read MLPQ…HPYS, PLTP…SNRQ, and RPKE…KSSV. Low complexity-rich tracts occupy residues 50 to 59, 126 to 142, and 334 to 350; these read PFSSTQSRRP, PSFS…PHSP, and QLPA…ADPV. A compositionally biased stretch (polar residues) spans 353-372; the sequence is TPSQTRSFRSAGLQSPNSPR.

This Homo sapiens (Human) protein is Proline-rich protein 30 (PRR30).